Reading from the N-terminus, the 470-residue chain is Glutamate--tRNA ligase (470 aa).

The 'HIGH' region signature appears at 9–19 (PSPTGYLHVGG). The 'KMSKS' region motif lies at 236–240 (RLSKR). Position 239 (Lys239) interacts with ATP.

It belongs to the class-I aminoacyl-tRNA synthetase family. Glutamate--tRNA ligase type 1 subfamily. Monomer.

The protein localises to the cytoplasm. The catalysed reaction is tRNA(Glu) + L-glutamate + ATP = L-glutamyl-tRNA(Glu) + AMP + diphosphate. Catalyzes the attachment of glutamate to tRNA(Glu) in a two-step reaction: glutamate is first activated by ATP to form Glu-AMP and then transferred to the acceptor end of tRNA(Glu). This Colwellia psychrerythraea (strain 34H / ATCC BAA-681) (Vibrio psychroerythus) protein is Glutamate--tRNA ligase.